Reading from the N-terminus, the 393-residue chain is 4-hydroxyphenylpyruvate dioxygenase (393 aa).

N-acetylthreonine is present on T2. 2 VOC domains span residues 18 to 149 (HFHS…LVEK) and 180 to 338 (IIDH…IFTK). K132 bears the N6-succinyllysine mark. H183 contacts Fe cation. 3 positions are modified to phosphoserine: S211, S226, and S250. Fe cation contacts are provided by H266 and E349.

The protein belongs to the 4HPPD family. Homodimer. Fe cation serves as cofactor.

It localises to the cytoplasm. Its subcellular location is the endoplasmic reticulum membrane. It is found in the golgi apparatus membrane. It catalyses the reaction 3-(4-hydroxyphenyl)pyruvate + O2 = homogentisate + CO2. Its pathway is amino-acid degradation; L-phenylalanine degradation; acetoacetate and fumarate from L-phenylalanine: step 3/6. Functionally, catalyzes the conversion of 4-hydroxyphenylpyruvic acid to homogentisic acid, one of the steps in tyrosine catabolism. The protein is 4-hydroxyphenylpyruvate dioxygenase (Hpd) of Mus musculus (Mouse).